We begin with the raw amino-acid sequence, 182 residues long: NADH-quinone oxidoreductase subunit B (182 aa).

[4Fe-4S] cluster-binding residues include Cys-46, Cys-47, Cys-112, and Cys-141.

It belongs to the complex I 20 kDa subunit family. NDH-1 is composed of 14 different subunits. Subunits NuoB, C, D, E, F, and G constitute the peripheral sector of the complex. [4Fe-4S] cluster is required as a cofactor.

It localises to the cell inner membrane. It catalyses the reaction a quinone + NADH + 5 H(+)(in) = a quinol + NAD(+) + 4 H(+)(out). NDH-1 shuttles electrons from NADH, via FMN and iron-sulfur (Fe-S) centers, to quinones in the respiratory chain. The immediate electron acceptor for the enzyme in this species is believed to be a menaquinone. Couples the redox reaction to proton translocation (for every two electrons transferred, four hydrogen ions are translocated across the cytoplasmic membrane), and thus conserves the redox energy in a proton gradient. The protein is NADH-quinone oxidoreductase subunit B of Flavobacterium johnsoniae (strain ATCC 17061 / DSM 2064 / JCM 8514 / BCRC 14874 / CCUG 350202 / NBRC 14942 / NCIMB 11054 / UW101) (Cytophaga johnsonae).